A 91-amino-acid chain; its full sequence is MNELEHFSPEDTRIFGRPFGFGRPFGFGRPFGFGYGFGRPGFGYGFGRPFGFFGGPFIGGLAGGLIGSALFNPYLYGGYPYYPYAPFPFYY.

A helical transmembrane segment spans residues 50-70; sequence FGFFGGPFIGGLAGGLIGSAL.

Its subcellular location is the cell membrane. This is an uncharacterized protein from Bacillus subtilis (strain 168).